Reading from the N-terminus, the 371-residue chain is Peptide chain release factor 2 (371 aa).

Residue glutamine 253 is modified to N5-methylglutamine.

It belongs to the prokaryotic/mitochondrial release factor family. In terms of processing, methylated by PrmC. Methylation increases the termination efficiency of RF2.

It is found in the cytoplasm. In terms of biological role, peptide chain release factor 2 directs the termination of translation in response to the peptide chain termination codons UGA and UAA. In Mycobacterium sp. (strain KMS), this protein is Peptide chain release factor 2.